The sequence spans 150 residues: uncharacterized protein (150 aa).

The region spanning 3–145 is the Flavodoxin-like domain; sequence VAILSGSVYG…DAEPWLAEFA (143 aa).

This sequence belongs to the flavodoxin family. MioC subfamily. FMN is required as a cofactor.

In terms of biological role, probable electron transporter. This is an uncharacterized protein from Pseudomonas aeruginosa (strain ATCC 15692 / DSM 22644 / CIP 104116 / JCM 14847 / LMG 12228 / 1C / PRS 101 / PAO1).